We begin with the raw amino-acid sequence, 119 residues long: DNA-binding protein inhibitor ID-3 (119 aa).

One can recognise a bHLH domain in the interval R28 to L80. The tract at residues E35 to P87 is interaction with IFI204.

As to quaternary structure, homodimer, and heterodimer with other HLH proteins. Interacts with CLOCK and BMAL1. Interacts with COPS5 and COPS7A. Interacts with IFI204. Interacts with GATA4 and NKX2-5. Interacts with ANKRD2; both proteins cooperate in myoblast differentiation. Post-translationally, polyubiquitinated; which is favored by Ifi204 and leads to proteasomal degradation. In terms of tissue distribution, expressed by myoblasts (at protein level).

It localises to the nucleus. It is found in the cytoplasm. Functionally, transcriptional regulator (lacking a basic DNA binding domain) which negatively regulates the basic helix-loop-helix (bHLH) transcription factors by forming heterodimers and inhibiting their DNA binding and transcriptional activity. Implicated in regulating a variety of cellular processes, including cellular growth, senescence, differentiation, apoptosis, angiogenesis, and neoplastic transformation. Involved in myogenesis by inhibiting skeletal muscle and cardiac myocyte differentiation and promoting muscle precursor cells proliferation. Inhibits the binding of E2A-containing protein complexes to muscle creatine kinase E-box enhancer. Regulates the circadian clock by repressing the transcriptional activator activity of the CLOCK-BMAL1 heterodimer. This chain is DNA-binding protein inhibitor ID-3 (Id3), found in Mus musculus (Mouse).